The primary structure comprises 458 residues: Bifunctional protein GlmU (458 aa).

Residues 1–230 (MLQIDVVILA…DWEVVGVNDK (230 aa)) are pyrophosphorylase. Residues 9–12 (LAAG), K23, Q75, and 80–81 (GT) contribute to the UDP-N-acetyl-alpha-D-glucosamine site. D104 provides a ligand contact to Mg(2+). 4 residues coordinate UDP-N-acetyl-alpha-D-glucosamine: G139, E155, N170, and N228. N228 contributes to the Mg(2+) binding site. A linker region spans residues 231–251 (IQLSTLERAHQQDVAKGLMEQ). Positions 252–458 (GVMFADPARF…NWKRPKKNKD (207 aa)) are N-acetyltransferase. The UDP-N-acetyl-alpha-D-glucosamine site is built by R334 and K352. H364 (proton acceptor) is an active-site residue. The UDP-N-acetyl-alpha-D-glucosamine site is built by Y367 and N378. Acetyl-CoA is bound by residues A381, 387 to 388 (NY), S406, A424, and R441.

It in the N-terminal section; belongs to the N-acetylglucosamine-1-phosphate uridyltransferase family. This sequence in the C-terminal section; belongs to the transferase hexapeptide repeat family. Homotrimer. It depends on Mg(2+) as a cofactor.

Its subcellular location is the cytoplasm. It carries out the reaction alpha-D-glucosamine 1-phosphate + acetyl-CoA = N-acetyl-alpha-D-glucosamine 1-phosphate + CoA + H(+). The catalysed reaction is N-acetyl-alpha-D-glucosamine 1-phosphate + UTP + H(+) = UDP-N-acetyl-alpha-D-glucosamine + diphosphate. The protein operates within nucleotide-sugar biosynthesis; UDP-N-acetyl-alpha-D-glucosamine biosynthesis; N-acetyl-alpha-D-glucosamine 1-phosphate from alpha-D-glucosamine 6-phosphate (route II): step 2/2. It participates in nucleotide-sugar biosynthesis; UDP-N-acetyl-alpha-D-glucosamine biosynthesis; UDP-N-acetyl-alpha-D-glucosamine from N-acetyl-alpha-D-glucosamine 1-phosphate: step 1/1. It functions in the pathway bacterial outer membrane biogenesis; LPS lipid A biosynthesis. Functionally, catalyzes the last two sequential reactions in the de novo biosynthetic pathway for UDP-N-acetylglucosamine (UDP-GlcNAc). The C-terminal domain catalyzes the transfer of acetyl group from acetyl coenzyme A to glucosamine-1-phosphate (GlcN-1-P) to produce N-acetylglucosamine-1-phosphate (GlcNAc-1-P), which is converted into UDP-GlcNAc by the transfer of uridine 5-monophosphate (from uridine 5-triphosphate), a reaction catalyzed by the N-terminal domain. In Nitrosomonas eutropha (strain DSM 101675 / C91 / Nm57), this protein is Bifunctional protein GlmU.